Reading from the N-terminus, the 559-residue chain is MAPTLQQAYRRRWWMACTAVLENLFFSAVLLGWGSLLIILKNEGFYSSTCPAESSTNTTQDEQRRWPGCDQQDEMLNLGFTIGSFVLSATTLPLGILMDRFGPRPVRLVGSACFTASCTLMALASRDVEALSPLIFLALSLNGFGGICLTFTSLTLPNMFGNLRSTLMALMIGSYASSAITFPGIKLIYDAGVAFVVIMFTWSGLACLIFLNCTLNWPIEAFPAPEEVNYTKKIKLSGLALDHKVTGDLFYTHVTTMGQRLSQKAPSLEDGSDAFMSPQDVRGTSENLPERSVPLRKSLCSPTFLWSLLTMGMTQLRIIFYMAAVNKMLEYLVTGGQEHETNEQQQKVAETVGFYSSVFGAMQLLCLLTCPLIGYIMDWRIKDCVDAPTQGTVLGDARDGVATKSIRPRYCKIQKLTNAISAFTLTNLLLVGFGITCLINNLHLQFVTFVLHTIVRGFFHSACGSLYAAVFPSNHFGTLTGLQSLISAVFALLQQPLFMAMVGPLKGEPFWVNLGLLLFSLLGFLLPSYLFYYRARLQQEYAANGMGPLKVLSGSEVTA.

A helical transmembrane segment spans residues 20 to 40 (VLENLFFSAVLLGWGSLLIIL). Residue Asn57 is glycosylated (N-linked (GlcNAc...) asparagine). 5 helical membrane-spanning segments follow: residues 78–98 (LGFT…GILM), 105–124 (PVRL…MALA), 131–151 (LSPL…CLTF), 168–188 (MALM…IKLI), and 191–211 (AGVA…LIFL). N-linked (GlcNAc...) asparagine glycans are attached at residues Asn212 and Asn229. 3 positions are modified to phosphoserine: Ser237, Ser262, and Ser267. The next 6 membrane-spanning stretches (helical) occupy residues 304–324 (FLWS…YMAA), 357–377 (SVFG…GYIM), 419–439 (AISA…TCLI), 446–466 (FVTF…CGSL), 485–505 (LISA…VGPL), and 510–530 (FWVN…PSYL).

It belongs to the SLC43A transporter (TC 2.A.1.44) family. In terms of tissue distribution, ubiquitously expressed in fetus and adult. Highest expression in adult pancreas, liver, skeletal muscle. In fetus, highest expression in liver and lower levels in kidney, and lung. Exclusively expressed in the glomeruli along the glomerular capillary walls.

The protein localises to the cell membrane. Its subcellular location is the apical cell membrane. The protein resides in the endoplasmic reticulum membrane. It catalyses the reaction D-leucine(in) = D-leucine(out). It carries out the reaction L-leucine(in) = L-leucine(out). The enzyme catalyses L-isoleucine(in) = L-isoleucine(out). The catalysed reaction is L-methionine(in) = L-methionine(out). It catalyses the reaction L-phenylalanine(in) = L-phenylalanine(out). It carries out the reaction L-valine(in) = L-valine(out). Its function is as follows. Uniport that mediates the transport of neutral amino acids such as L-leucine, L-isoleucine, L-valine, and L-phenylalanine. The transport activity is sodium ions-independent, electroneutral and mediated by a facilitated diffusion. The polypeptide is Large neutral amino acids transporter small subunit 3 (Homo sapiens (Human)).